The primary structure comprises 377 residues: UPF0754 membrane protein GK0639 (377 aa).

The next 2 membrane-spanning stretches (helical) occupy residues 7–27 and 357–377; these read LLFMVAVGALIGGVTNFIAIV and YLGALLGGLIGAVQGVIGLWL.

This sequence belongs to the UPF0754 family.

It localises to the cell membrane. The protein is UPF0754 membrane protein GK0639 of Geobacillus kaustophilus (strain HTA426).